The sequence spans 517 residues: Transcription factor MTB3 (517 aa).

The interval 290–331 is disordered; it reads GNSSNGYRSDEGEGKLYKEELDERKPRKRGRKPANGREEALN. Basic and acidic residues predominate over residues 297–314; that stretch reads RSDEGEGKLYKEELDERK. The tract at residues 327–340 is basic motif; degenerate; the sequence is EEALNHVEAERQRR. One can recognise a bHLH domain in the interval 327–376; it reads EEALNHVEAERQRREKLNQRFYALRAVVPNISKMDKASLLGDAIAYITDL. Residues 341–376 form a helix-loop-helix motif region; sequence EKLNQRFYALRAVVPNISKMDKASLLGDAIAYITDL.

It localises to the nucleus. Transcription factor that negatively regulates jasmonate (JA) signaling. Negatively regulates JA-dependent response to wounding, JA-induced expression of defense genes, JA-dependent responses against herbivorous insects, and JA-dependent resistance against Botrytis cinerea infection. Plays a positive role in resistance against the bacterial pathogen Pseudomonas syringae pv tomato DC3000. The chain is Transcription factor MTB3 from Solanum lycopersicum (Tomato).